Reading from the N-terminus, the 399-residue chain is Elongation factor Tu (399 aa).

Positions 10–209 (KPHVNIGTIG…AVDEYIPEPT (200 aa)) constitute a tr-type G domain. Residues 19–26 (GHVDHGKT) form a G1 region. Residue 19–26 (GHVDHGKT) coordinates GTP. Residue Thr-26 coordinates Mg(2+). Positions 60-64 (GITIA) are G2. The interval 81 to 84 (DCPG) is G3. GTP-binding positions include 81 to 85 (DCPGH) and 136 to 139 (NKED). The interval 136-139 (NKED) is G4. A G5 region spans residues 174–176 (SAK).

It belongs to the TRAFAC class translation factor GTPase superfamily. Classic translation factor GTPase family. EF-Tu/EF-1A subfamily. In terms of assembly, monomer.

The protein resides in the cytoplasm. It carries out the reaction GTP + H2O = GDP + phosphate + H(+). In terms of biological role, GTP hydrolase that promotes the GTP-dependent binding of aminoacyl-tRNA to the A-site of ribosomes during protein biosynthesis. The chain is Elongation factor Tu from Sulfurimonas denitrificans (strain ATCC 33889 / DSM 1251) (Thiomicrospira denitrificans (strain ATCC 33889 / DSM 1251)).